A 425-amino-acid polypeptide reads, in one-letter code: Enolase (425 aa).

Gln-163 is a (2R)-2-phosphoglycerate binding site. The active-site Proton donor is Glu-205. Mg(2+)-binding residues include Asp-242, Glu-285, and Asp-312. Lys-337, Arg-366, Ser-367, and Lys-388 together coordinate (2R)-2-phosphoglycerate. The Proton acceptor role is filled by Lys-337.

Belongs to the enolase family. Mg(2+) serves as cofactor.

It is found in the cytoplasm. It localises to the secreted. The protein localises to the cell surface. It catalyses the reaction (2R)-2-phosphoglycerate = phosphoenolpyruvate + H2O. It participates in carbohydrate degradation; glycolysis; pyruvate from D-glyceraldehyde 3-phosphate: step 4/5. In terms of biological role, catalyzes the reversible conversion of 2-phosphoglycerate (2-PG) into phosphoenolpyruvate (PEP). It is essential for the degradation of carbohydrates via glycolysis. The protein is Enolase of Ruegeria pomeroyi (strain ATCC 700808 / DSM 15171 / DSS-3) (Silicibacter pomeroyi).